A 741-amino-acid chain; its full sequence is Phosphoribosylformylglycinamidine synthase subunit PurL (741 aa).

Histidine 53 is a catalytic residue. ATP-binding residues include tyrosine 56 and lysine 95. Residue glutamate 97 coordinates Mg(2+). Substrate contacts are provided by residues serine 98–histidine 101 and arginine 120. The active-site Proton acceptor is histidine 99. A Mg(2+)-binding site is contributed by aspartate 121. Residue glutamine 244 participates in substrate binding. Mg(2+) is bound at residue aspartate 274. Glutamate 318–glutamine 320 is a substrate binding site. Residues aspartate 501 and glycine 538 each contribute to the ATP site. Asparagine 539 contacts Mg(2+). A substrate-binding site is contributed by serine 541.

Belongs to the FGAMS family. As to quaternary structure, monomer. Part of the FGAM synthase complex composed of 1 PurL, 1 PurQ and 2 PurS subunits.

The protein localises to the cytoplasm. It catalyses the reaction N(2)-formyl-N(1)-(5-phospho-beta-D-ribosyl)glycinamide + L-glutamine + ATP + H2O = 2-formamido-N(1)-(5-O-phospho-beta-D-ribosyl)acetamidine + L-glutamate + ADP + phosphate + H(+). The protein operates within purine metabolism; IMP biosynthesis via de novo pathway; 5-amino-1-(5-phospho-D-ribosyl)imidazole from N(2)-formyl-N(1)-(5-phospho-D-ribosyl)glycinamide: step 1/2. Functionally, part of the phosphoribosylformylglycinamidine synthase complex involved in the purines biosynthetic pathway. Catalyzes the ATP-dependent conversion of formylglycinamide ribonucleotide (FGAR) and glutamine to yield formylglycinamidine ribonucleotide (FGAM) and glutamate. The FGAM synthase complex is composed of three subunits. PurQ produces an ammonia molecule by converting glutamine to glutamate. PurL transfers the ammonia molecule to FGAR to form FGAM in an ATP-dependent manner. PurS interacts with PurQ and PurL and is thought to assist in the transfer of the ammonia molecule from PurQ to PurL. In Limosilactobacillus fermentum (strain NBRC 3956 / LMG 18251) (Lactobacillus fermentum), this protein is Phosphoribosylformylglycinamidine synthase subunit PurL.